The primary structure comprises 252 residues: Trans-aconitate 2-methyltransferase (252 aa).

This sequence belongs to the methyltransferase superfamily. Tam family.

The protein localises to the cytoplasm. The enzyme catalyses trans-aconitate + S-adenosyl-L-methionine = (E)-3-(methoxycarbonyl)pent-2-enedioate + S-adenosyl-L-homocysteine. Catalyzes the S-adenosylmethionine monomethyl esterification of trans-aconitate. The protein is Trans-aconitate 2-methyltransferase of Escherichia coli O6:H1 (strain CFT073 / ATCC 700928 / UPEC).